Here is a 72-residue protein sequence, read N- to C-terminus: Translation initiation factor IF-1 (72 aa).

An S1-like domain is found at Met1 to Arg72.

It belongs to the IF-1 family. As to quaternary structure, component of the 30S ribosomal translation pre-initiation complex which assembles on the 30S ribosome in the order IF-2 and IF-3, IF-1 and N-formylmethionyl-tRNA(fMet); mRNA recruitment can occur at any time during PIC assembly.

It is found in the cytoplasm. One of the essential components for the initiation of protein synthesis. Stabilizes the binding of IF-2 and IF-3 on the 30S subunit to which N-formylmethionyl-tRNA(fMet) subsequently binds. Helps modulate mRNA selection, yielding the 30S pre-initiation complex (PIC). Upon addition of the 50S ribosomal subunit IF-1, IF-2 and IF-3 are released leaving the mature 70S translation initiation complex. The polypeptide is Translation initiation factor IF-1 (Buchnera aphidicola subsp. Baizongia pistaciae (strain Bp)).